The chain runs to 426 residues: Proline--tRNA ligase (426 aa).

This sequence belongs to the class-II aminoacyl-tRNA synthetase family. ProS type 2 subfamily. In terms of assembly, homodimer.

Its subcellular location is the cytoplasm. The catalysed reaction is tRNA(Pro) + L-proline + ATP = L-prolyl-tRNA(Pro) + AMP + diphosphate. In terms of biological role, catalyzes the attachment of proline to tRNA(Pro) in a two-step reaction: proline is first activated by ATP to form Pro-AMP and then transferred to the acceptor end of tRNA(Pro). The sequence is that of Proline--tRNA ligase from Rickettsia rickettsii (strain Iowa).